Reading from the N-terminus, the 291-residue chain is Insulin-like growth factor-binding protein 3 (291 aa).

An N-terminal signal peptide occupies residues Met1–Ala27. Residues Gly28–Pro134 form an IGF-binding region. Positions Pro36–Ala117 constitute an IGFBP N-terminal domain. 6 disulfides stabilise this stretch: Cys40–Cys67, Cys43–Cys69, Cys51–Cys70, Cys58–Cys73, Cys81–Cys94, and Cys88–Cys114. Residues Asn116 and Asn136 are each glycosylated (N-linked (GlcNAc...) (complex) asparagine). Disordered regions lie at residues Ala130 to Asp162 and Asp189 to Gly211. Over residues Ala146–Ser156 the composition is skewed to low complexity. At Ser148 the chain carries Phosphoserine; by FAM20C. Residues Glu191–Ser202 are compositionally biased toward polar residues. Ser194 bears the Phosphoserine; by CK2 mark. Asn199 carries an N-linked (GlcNAc...) (complex) asparagine glycan. Ser201 is modified (phosphoserine; by FAM20C). A Phosphoserine; by CK2 modification is found at Ser202. Residues Tyr210–Cys285 form the Thyroglobulin type-1 domain. Cystine bridges form between Cys213/Cys240, Cys251/Cys262, and Cys264/Cys285.

As to quaternary structure, interacts with XLKD1. Binds IGF2 more than IGF1. Forms a ternary complex of about 140 to 150 kDa with IGF1 or IGF2 and a 85 kDa glycoprotein (ALS). Interacts with humanin; humanin competes with importin KPNB1 for binding to IGFBP3, blocking IGFBP3 nuclear import and IGFBP3-mediated apoptosis. Interacts with TMEM219. Interacts with RXRA; this interaction modulates the transcriptional activity of RXRA. Interacts with LRP1; this interaction mediates cell growth inhibition independent of IGF1. In terms of processing, phosphorylated by FAM20C in the extracellular medium. Phosphorylated by CK2; resulting in decreased nuclear localization. Expressed by most tissues. Present in plasma.

Its subcellular location is the secreted. The protein resides in the nucleus. Its function is as follows. Multifunctional protein that plays a critical role in regulating the availability of IGFs such as IGF1 and IGF2 to their receptors and thereby regulates IGF-mediated cellular processes including proliferation, differentiation, and apoptosis in a cell-type specific manner. Also exhibits IGF-independent antiproliferative and apoptotic effects mediated by its receptor TMEM219/IGFBP-3R. Inhibits the positive effect of humanin on insulin sensitivity. Promotes testicular germ cell apoptosis. Acts via LRP-1/alpha2M receptor, also known as TGF-beta type V receptor, to mediate cell growth inhibition independent of IGF1. Mechanistically, induces serine-specific dephosphorylation of IRS1 or IRS2 upon ligation to its receptor, leading to the inhibitory cascade. In the nucleus, interacts with transcription factors such as retinoid X receptor-alpha/RXRA to regulate transcriptional signaling and apoptosis. The chain is Insulin-like growth factor-binding protein 3 (IGFBP3) from Homo sapiens (Human).